We begin with the raw amino-acid sequence, 129 residues long: Small ribosomal subunit protein uS12 (129 aa).

D89 carries the 3-methylthioaspartic acid modification. The interval 110–129 (RKQGRSRYGAPRKQVVATKK) is disordered.

This sequence belongs to the universal ribosomal protein uS12 family. As to quaternary structure, part of the 30S ribosomal subunit. Contacts proteins S8 and S17. May interact with IF1 in the 30S initiation complex.

With S4 and S5 plays an important role in translational accuracy. In terms of biological role, interacts with and stabilizes bases of the 16S rRNA that are involved in tRNA selection in the A site and with the mRNA backbone. Located at the interface of the 30S and 50S subunits, it traverses the body of the 30S subunit contacting proteins on the other side and probably holding the rRNA structure together. The combined cluster of proteins S8, S12 and S17 appears to hold together the shoulder and platform of the 30S subunit. This Rickettsia bellii (strain OSU 85-389) protein is Small ribosomal subunit protein uS12.